Consider the following 149-residue polypeptide: UPF0178 protein CPF_2548 (149 aa).

This sequence belongs to the UPF0178 family.

This chain is UPF0178 protein CPF_2548, found in Clostridium perfringens (strain ATCC 13124 / DSM 756 / JCM 1290 / NCIMB 6125 / NCTC 8237 / Type A).